We begin with the raw amino-acid sequence, 206 residues long: LexA repressor (206 aa).

The segment at residues 28-48 (RAEIATRLGFKSANAAEEHLK) is a DNA-binding region (H-T-H motif). Catalysis depends on for autocatalytic cleavage activity residues Ser-123 and Lys-160.

The protein belongs to the peptidase S24 family. Homodimer.

The enzyme catalyses Hydrolysis of Ala-|-Gly bond in repressor LexA.. Represses a number of genes involved in the response to DNA damage (SOS response), including recA and lexA. In the presence of single-stranded DNA, RecA interacts with LexA causing an autocatalytic cleavage which disrupts the DNA-binding part of LexA, leading to derepression of the SOS regulon and eventually DNA repair. This is LexA repressor from Shewanella baltica (strain OS223).